Here is a 346-residue protein sequence, read N- to C-terminus: Zinc-type alcohol dehydrogenase-like protein C1773.06c (346 aa).

It belongs to the zinc-containing alcohol dehydrogenase family. Quinone oxidoreductase subfamily.

The protein resides in the cytoplasm. The protein is Zinc-type alcohol dehydrogenase-like protein C1773.06c of Schizosaccharomyces pombe (strain 972 / ATCC 24843) (Fission yeast).